A 686-amino-acid chain; its full sequence is MNLIILFLPFVGAFISGFLGRFVGTTGAQILTCACILTSALLSLYYWLSINELIIGLFSFEGDQVYFTDWNFLSNNTFINLGTWVDSEYIKISWEFTFNEITLPFLFTVLFISFLIHLFSVNYMANDPHIQRFFSYLSLFTFFMAILVTGANYFVLFVGWEGIGVVSYLLINFWFTRIQANKAAILAFNTNRIGDMALSIAYFVMLPAFGSADFSTVFSLPAYINQTTITIIGFLLLVGAMAKSSQIPLHNWLPGSMEGPTPVSALIHAATLVTAGSYLLIRSSPILEYAPTVLLVITIIGASTAFFAATCGLVQNDIKRIIAFSTISQLGYMVMAIGLSQYNVALAHTLFHAYFKALLFLGAGSVIHAFGDIQDVRKMGGLINFLPFTYAVMLVGTLSLLATPFLTGFYSKDLIIELAYGQYSFSGTYAYILGSVTAGLTAFYSFRLISLVFLTKPNGNKQNYLNSHEASITVIIPLAVLAIFSIFFGYVTSDLFVGIGSDFFANTIFIHPNNISLVEAEFSMSLIFKLLPTIFSLAGTLFALYLYNYNPHFIDSLVENNLGKKVYGFLNGKYYFDVIYNNYIISKGLQFGYNISKEIDRGVIELIGPYGMSNVLYSTSANIAKLDTGIITTYALYITLGLLSLLFIVFAPMLVNTTINDEFRLIILFIFTLIVNSAYLNKKLSK.

A run of 17 helical transmembrane segments spans residues 3 to 23, 40 to 60, 101 to 121, 139 to 159, 160 to 180, 198 to 218, 222 to 242, 261 to 281, 293 to 313, 321 to 341, 350 to 370, 382 to 402, 432 to 452, 472 to 492, 526 to 546, 635 to 655, and 665 to 685; these read LIILFLPFVGAFISGFLGRFV, ALLSLYYWLSINELIIGLFSF, ITLPFLFTVLFISFLIHLFSV, LFTFFMAILVTGANYFVLFVG, WEGIGVVSYLLINFWFTRIQA, LSIAYFVMLPAFGSADFSTVF, AYINQTTITIIGFLLLVGAMA, TPVSALIHAATLVTAGSYLLI, VLLVITIIGASTAFFAATCGL, IIAFSTISQLGYMVMAIGLSQ, LFHAYFKALLFLGAGSVIHAF, LINFLPFTYAVMLVGTLSLLA, ILGSVTAGLTAFYSFRLISLV, ITVIIPLAVLAIFSIFFGYVT, LIFKLLPTIFSLAGTLFALYL, ALYITLGLLSLLFIVFAPMLV, and LIILFIFTLIVNSAYLNKKLS.

Belongs to the complex I subunit 5 family.

Its subcellular location is the mitochondrion inner membrane. The catalysed reaction is a ubiquinone + NADH + 5 H(+)(in) = a ubiquinol + NAD(+) + 4 H(+)(out). Its function is as follows. Core subunit of the mitochondrial membrane respiratory chain NADH dehydrogenase (Complex I) that is believed to belong to the minimal assembly required for catalysis. Complex I functions in the transfer of electrons from NADH to the respiratory chain. The immediate electron acceptor for the enzyme is believed to be ubiquinone. The sequence is that of NADH-ubiquinone oxidoreductase chain 5 (ND5) from Schizophyllum commune (Split gill fungus).